Consider the following 136-residue polypeptide: Ribonuclease VapC1 (136 aa).

The PINc domain maps to 18 to 129 (ILVDTSVLID…KKHFERLKEF (112 aa)). Residues aspartate 21 and aspartate 101 each contribute to the Mg(2+) site.

It belongs to the PINc/VapC protein family. Mg(2+) serves as cofactor.

In terms of biological role, toxic component of a type II toxin-antitoxin (TA) system. An RNase. Its cognate antitoxin is VapB1. The protein is Ribonuclease VapC1 of Methanocaldococcus jannaschii (strain ATCC 43067 / DSM 2661 / JAL-1 / JCM 10045 / NBRC 100440) (Methanococcus jannaschii).